The primary structure comprises 504 residues: Occludin (504 aa).

Over 1–57 the chain is Cytoplasmic; the sequence is MFSKKSYDGPPAGYGPPTGYGAPTADYGYGSPPPGSYYVDDAPQLFYKWTSPPGAVR. The region spanning 51–253 is the MARVEL domain; that stretch reads SPPGAVRGLQ…ICFFAQKTRS (203 aa). The chain crosses the membrane as a helical span at residues 58 to 80; sequence GLQAGVLVLCIAIFACVASTLAW. At 81 to 123 the chain is on the extracellular side; that stretch reads DYGYGLGGAYGTGLGGFYGSNYYGSGLSYSYGYGGYYGGVNQR. Residues 124–148 traverse the membrane as a helical segment; that stretch reads TANGFMIAMAVLCFLAQLGLLVAAL. The Cytoplasmic segment spans residues 149–158; the sequence is SKSGATRSRR. A helical transmembrane segment spans residues 159–183; that stretch reads FYLAVLVLSAVLAFVMLIASIVYIM. Over 184 to 227 the chain is Extracellular; it reads GVNPQAQMSSGYYYSPLLAMCSQAYGSTYLNQYIYHYCTVDPQE. A disulfide bond links cysteine 204 and cysteine 221. A helical transmembrane segment spans residues 228-249; it reads AVAAVCGFLIVILLCLICFFAQ. The Cytoplasmic portion of the chain corresponds to 250-504; sequence KTRSKIWRYG…MVSAYDKVRG (255 aa). A disordered region spans residues 324–396; it reads PSGTYSSRGD…VESSDERDQE (73 aa). Positions 361–370 are enriched in basic residues; that stretch reads PARRGRRRRR. Residues tyrosine 379 and tyrosine 383 each carry the phosphotyrosine modification. Positions 379 to 385 are interaction with TJP1; that stretch reads YETDYTT. The region spanning 396 to 504 is the OCEL domain; the sequence is EQWASLYPPI…MVSAYDKVRG (109 aa). Residues 412-471 adopt a coiled-coil conformation; sequence QRYKQEFDTDLKRYKQLCAEMDSINDRLNQLSRRLDSITEDSPQYQDVAEEYNQLKDLKR.

It belongs to the ELL/occludin family. Interacts with TJP1 and TJP3. Phosphorylated. As to expression, localized at tight junctions of both epithelial and endothelial cells. Highly expressed in lung and liver. Expressed at a lower level in brain.

It is found in the cell membrane. The protein localises to the cell junction. The protein resides in the tight junction. Functionally, may play a role in the formation and regulation of the tight junction (TJ) paracellular permeability barrier. Interacts with ZO-1. The polypeptide is Occludin (OCLN) (Gallus gallus (Chicken)).